We begin with the raw amino-acid sequence, 545 residues long: Probable acyl-activating enzyme 4 (545 aa).

The protein belongs to the ATP-dependent AMP-binding enzyme family. Expressed in roots, leaves, stems, flowers and developing seeds.

Functionally, may act as an acid--thiol ligase that activates carboxylic acids by forming acyl-CoAs. This is Probable acyl-activating enzyme 4 (AEE4) from Arabidopsis thaliana (Mouse-ear cress).